We begin with the raw amino-acid sequence, 288 residues long: 4-hydroxybenzoate octaprenyltransferase (288 aa).

The next 7 helical transmembrane spans lie at 38–58 (IAAQSIPSLHILIVFTAGVFL), 98–120 (ILFASLVGLSFLLVLTLNSMTIW), 141–161 (LLQVVLGAAFGWSIPMGFSAV), 163–183 (ESLPLVCWVLFLVNILWSVIY), 213–233 (LIIGILQIVMIVLLVLVGSLA), 238–258 (VYYIALSLSALLFIYQQKLMV), and 268–288 (AFLNNNYVGLILFIGIFLSYL).

The protein belongs to the UbiA prenyltransferase family. Mg(2+) is required as a cofactor.

It localises to the cell inner membrane. It carries out the reaction all-trans-octaprenyl diphosphate + 4-hydroxybenzoate = 4-hydroxy-3-(all-trans-octaprenyl)benzoate + diphosphate. It functions in the pathway cofactor biosynthesis; ubiquinone biosynthesis. Its function is as follows. Catalyzes the prenylation of para-hydroxybenzoate (PHB) with an all-trans polyprenyl group. Mediates the second step in the final reaction sequence of ubiquinone-8 (UQ-8) biosynthesis, which is the condensation of the polyisoprenoid side chain with PHB, generating the first membrane-bound Q intermediate 3-octaprenyl-4-hydroxybenzoate. This Providencia stuartii protein is 4-hydroxybenzoate octaprenyltransferase.